Here is a 600-residue protein sequence, read N- to C-terminus: Putative DNA 3'-5' helicase Rad25 (600 aa).

Residues 253 to 402 (VDRFEDASAG…DIYTLVGRPI (150 aa)) form the Helicase ATP-binding domain. 266-273 (GPPGSGKT) contributes to the ATP binding site. The DEAH box motif lies at 356–359 (DEVH). The Helicase C-terminal domain maps to 457-600 (EIEHLVDQHG…VTESDASHSP (144 aa)). The tract at residues 569–600 (RGTEEEDHARSRMRHLSTKGVRVTESDASHSP) is disordered. The span at 590–600 (RVTESDASHSP) shows a compositional bias: basic and acidic residues.

This sequence belongs to the helicase family. RAD25/XPB subfamily.

It carries out the reaction Couples ATP hydrolysis with the unwinding of duplex DNA by translocating in the 3'-5' direction.. It catalyses the reaction ATP + H2O = ADP + phosphate + H(+). This chain is Putative DNA 3'-5' helicase Rad25, found in Halobacterium salinarum (strain ATCC 700922 / JCM 11081 / NRC-1) (Halobacterium halobium).